We begin with the raw amino-acid sequence, 72 residues long: Large ribosomal subunit protein bL31 (72 aa).

Cys-16, Cys-18, Cys-37, and Cys-40 together coordinate Zn(2+).

This sequence belongs to the bacterial ribosomal protein bL31 family. Type A subfamily. Part of the 50S ribosomal subunit. Zn(2+) is required as a cofactor.

Functionally, binds the 23S rRNA. The sequence is that of Large ribosomal subunit protein bL31 from Pseudomonas fluorescens (strain Pf0-1).